A 240-amino-acid polypeptide reads, in one-letter code: ATP synthase subunit a (240 aa).

5 helical membrane passes run 21-41 (LSSM…AMLF), 83-103 (AVTL…FAII), 116-136 (DPTV…FYGV), 184-204 (LLGL…GAAI), and 207-227 (LIWQ…FVML).

This sequence belongs to the ATPase A chain family. In terms of assembly, F-type ATPases have 2 components, CF(1) - the catalytic core - and CF(0) - the membrane proton channel. CF(1) has five subunits: alpha(3), beta(3), gamma(1), delta(1), epsilon(1). CF(0) has three main subunits: a(1), b(2) and c(9-12). The alpha and beta chains form an alternating ring which encloses part of the gamma chain. CF(1) is attached to CF(0) by a central stalk formed by the gamma and epsilon chains, while a peripheral stalk is formed by the delta and b chains.

It localises to the cell membrane. Functionally, key component of the proton channel; it plays a direct role in the translocation of protons across the membrane. The protein is ATP synthase subunit a of Macrococcus caseolyticus (strain JCSC5402) (Macrococcoides caseolyticum).